Here is a 183-residue protein sequence, read N- to C-terminus: 2-C-methyl-D-erythritol 2,4-cyclodiphosphate synthase (183 aa).

2 residues coordinate a divalent metal cation: Asp-10 and His-12. 4-CDP-2-C-methyl-D-erythritol 2-phosphate-binding positions include 10-12 (DVH) and 38-39 (HS). His-46 provides a ligand contact to a divalent metal cation. Residues 60-62 (DIG) and 65-69 (FPDTD) each bind 4-CDP-2-C-methyl-D-erythritol 2-phosphate.

Belongs to the IspF family. Homotrimer. A divalent metal cation serves as cofactor.

It carries out the reaction 4-CDP-2-C-methyl-D-erythritol 2-phosphate = 2-C-methyl-D-erythritol 2,4-cyclic diphosphate + CMP. Its pathway is isoprenoid biosynthesis; isopentenyl diphosphate biosynthesis via DXP pathway; isopentenyl diphosphate from 1-deoxy-D-xylulose 5-phosphate: step 4/6. Its function is as follows. Involved in the biosynthesis of isopentenyl diphosphate (IPP) and dimethylallyl diphosphate (DMAPP), two major building blocks of isoprenoid compounds. Catalyzes the conversion of 4-diphosphocytidyl-2-C-methyl-D-erythritol 2-phosphate (CDP-ME2P) to 2-C-methyl-D-erythritol 2,4-cyclodiphosphate (ME-CPP) with a corresponding release of cytidine 5-monophosphate (CMP). The polypeptide is 2-C-methyl-D-erythritol 2,4-cyclodiphosphate synthase (Verminephrobacter eiseniae (strain EF01-2)).